The chain runs to 78 residues: Protein SlyX homolog (78 aa).

The protein belongs to the SlyX family.

This Photobacterium profundum (strain SS9) protein is Protein SlyX homolog.